The sequence spans 162 residues: Mediator of RNA polymerase II transcription subunit 31 (162 aa).

Residues 131–162 are disordered; sequence VQGGQNVEAGDTGHNEGDQGTQQDKENIALKT. The segment covering 141-162 has biased composition (basic and acidic residues); sequence DTGHNEGDQGTQQDKENIALKT.

This sequence belongs to the Mediator complex subunit 31 family. In terms of assembly, component of the Mediator complex.

It is found in the nucleus. Functionally, component of the Mediator complex, a coactivator involved in the regulated transcription of nearly all RNA polymerase II-dependent genes. Mediator functions as a bridge to convey information from gene-specific regulatory proteins to the basal RNA polymerase II transcription machinery. Mediator is recruited to promoters by direct interactions with regulatory proteins and serves as a scaffold for the assembly of a functional preinitiation complex with RNA polymerase II and the general transcription factors. This Aspergillus fumigatus (strain ATCC MYA-4609 / CBS 101355 / FGSC A1100 / Af293) (Neosartorya fumigata) protein is Mediator of RNA polymerase II transcription subunit 31 (soh1).